Consider the following 412-residue polypeptide: O-acetyl-L-homoserine sulfhydrylase 2 (412 aa).

N6-(pyridoxal phosphate)lysine is present on K202.

The protein belongs to the trans-sulfuration enzymes family. Homotetramer. Pyridoxal 5'-phosphate is required as a cofactor.

It carries out the reaction O-acetyl-L-homoserine + hydrogen sulfide = L-homocysteine + acetate. Inhibited by the carbonyl reagents hydroxylamine and phenylhydrazine. Also inhibited by methionine and propargylglycine. Functionally, catalyzes the conversion of O-acetyl-L-homoserine (OAH) into homocysteine in the methionine biosynthesis pathway. Has weak activity with O-acetyl-L-serine, O-phospho-L-serine, L-serine, O-succinyl-L-homoserine and L-homoserine. Shows a very low CTT gamma-synthase activity. The sequence is that of O-acetyl-L-homoserine sulfhydrylase 2 from Thermus thermophilus (strain ATCC 27634 / DSM 579 / HB8).